We begin with the raw amino-acid sequence, 72 residues long: Toxin Acra II-1 (72 aa).

The LCN-type CS-alpha/beta domain maps to 3 to 67; it reads VPGNYPLNTY…VWNAAKNYCK (65 aa). 3 disulfides stabilise this stretch: Cys-18–Cys-41, Cys-27–Cys-46, and Cys-31–Cys-48.

Belongs to the long (3 C-C) scorpion toxin superfamily. Sodium channel inhibitor family. Beta subfamily. In terms of tissue distribution, expressed by the venom gland.

Its subcellular location is the secreted. Its function is as follows. Binds to sodium channels (Nav) and affects the channel activation process. The polypeptide is Toxin Acra II-1 (Androctonus crassicauda (Arabian fat-tailed scorpion)).